We begin with the raw amino-acid sequence, 221 residues long: Very-long-chain (3R)-3-hydroxyacyl-CoA dehydratase PASTICCINO 2A (221 aa).

Residues 1-11 lie on the Cytoplasmic side of the membrane; that stretch reads MAGVGSAVRRL. A helical membrane pass occupies residues 12 to 32; that stretch reads YLSVYNWAVFFGWAQVLYYAV. Residues 33-51 lie on the Lumenal side of the membrane; it reads TTLLESGHEAVYAAVERPL. The chain crosses the membrane as a helical span at residues 52–70; the sequence is QFAQTAAFLEILHGLVGLV. Residues 71-76 are Cytoplasmic-facing; it reads RSPVSA. Residues 77-95 form a helical membrane-spanning segment; the sequence is TLPQIGSRLFLTWGILWSF. The Lumenal segment spans residues 96-100; the sequence is PETHS. The helical transmembrane segment at 101-121 threads the bilayer; it reads HILVTSLVISWSITEIIRYSF. Residues 122-141 lie on the Cytoplasmic side of the membrane; sequence FGMKEAFGFAPSWLLWLRYS. Residues 142–165 traverse the membrane as a helical segment; it reads TFMVLYPTGISSEVGLIYIALPYM. Residues Tyr-147 and Glu-154 contribute to the active site. The Lumenal segment spans residues 166 to 184; that stretch reads KASEKYCLRMPNKWNFSFD. The helical transmembrane segment at 185-209 threads the bilayer; it reads FFYASILSLAIYVPGSPHMFTYMLA. Topologically, residues 210-221 are cytoplasmic; the sequence is QRKKALAKAKAA.

It belongs to the very long-chain fatty acids dehydratase HACD family.

It is found in the endoplasmic reticulum membrane. The enzyme catalyses a very-long-chain (3R)-3-hydroxyacyl-CoA = a very-long-chain (2E)-enoyl-CoA + H2O. Its pathway is lipid metabolism; fatty acid biosynthesis. Catalyzes the third of the four reactions of the long-chain fatty acids elongation cycle. This endoplasmic reticulum-bound enzymatic process, allows the addition of two carbons to the chain of long- and very long-chain fatty acids/VLCFAs per cycle. This enzyme catalyzes the dehydration of the 3-hydroxyacyl-CoA intermediate into trans-2,3-enoyl-CoA, within each cycle of fatty acid elongation. Thereby, it participates in the production of VLCFAs of different chain lengths that are involved in multiple biological processes as precursors of membrane lipids and lipid mediators. May be an anti-phosphatase that prevents CDKA-1 dephosphorylation and activation. Involved in the hormonal control of cell division and differentiation. Required for proliferation control of meristematic and non-meristematic cells. Negative regulator of the cell cycle. The sequence is that of Very-long-chain (3R)-3-hydroxyacyl-CoA dehydratase PASTICCINO 2A (PAS2A) from Oryza sativa subsp. japonica (Rice).